The following is a 263-amino-acid chain: 4-hydroxy-tetrahydrodipicolinate reductase (263 aa).

10-15 is an NAD(+) binding site; it reads GASGKM. Arg38 serves as a coordination point for NADP(+). NAD(+)-binding positions include 97 to 99 and 123 to 126; these read GTT and APNF. His153 (proton donor/acceptor) is an active-site residue. A (S)-2,3,4,5-tetrahydrodipicolinate-binding site is contributed by His154. Lys157 acts as the Proton donor in catalysis. 163 to 164 provides a ligand contact to (S)-2,3,4,5-tetrahydrodipicolinate; it reads GT.

Belongs to the DapB family.

It localises to the cytoplasm. It catalyses the reaction (S)-2,3,4,5-tetrahydrodipicolinate + NAD(+) + H2O = (2S,4S)-4-hydroxy-2,3,4,5-tetrahydrodipicolinate + NADH + H(+). It carries out the reaction (S)-2,3,4,5-tetrahydrodipicolinate + NADP(+) + H2O = (2S,4S)-4-hydroxy-2,3,4,5-tetrahydrodipicolinate + NADPH + H(+). It functions in the pathway amino-acid biosynthesis; L-lysine biosynthesis via DAP pathway; (S)-tetrahydrodipicolinate from L-aspartate: step 4/4. Its function is as follows. Catalyzes the conversion of 4-hydroxy-tetrahydrodipicolinate (HTPA) to tetrahydrodipicolinate. The sequence is that of 4-hydroxy-tetrahydrodipicolinate reductase from Dehalococcoides mccartyi (strain CBDB1).